We begin with the raw amino-acid sequence, 129 residues long: Small ribosomal subunit protein uS11 (129 aa).

Belongs to the universal ribosomal protein uS11 family. Part of the 30S ribosomal subunit. Interacts with proteins S7 and S18. Binds to IF-3.

Its function is as follows. Located on the platform of the 30S subunit, it bridges several disparate RNA helices of the 16S rRNA. Forms part of the Shine-Dalgarno cleft in the 70S ribosome. This Beijerinckia indica subsp. indica (strain ATCC 9039 / DSM 1715 / NCIMB 8712) protein is Small ribosomal subunit protein uS11.